A 448-amino-acid polypeptide reads, in one-letter code: Asparagine--tRNA ligase (448 aa).

The protein belongs to the class-II aminoacyl-tRNA synthetase family. Homodimer.

It is found in the cytoplasm. The catalysed reaction is tRNA(Asn) + L-asparagine + ATP = L-asparaginyl-tRNA(Asn) + AMP + diphosphate + H(+). The sequence is that of Asparagine--tRNA ligase from Streptococcus pyogenes serotype M4 (strain MGAS10750).